The chain runs to 378 residues: Cyclic GMP-AMP synthase-like receptor 1 (378 aa).

Glutamate 71, aspartate 73, and aspartate 187 together coordinate Mg(2+). 71–73 (EFD) contacts ATP. Residues aspartate 187 and 233–240 (TSSFYEAE) contribute to the GTP site. Residues 237–240 (YEAE), lysine 258, and 271–275 (SYHIK) contribute to the ATP site.

It belongs to the mab-21 family. Mg(2+) is required as a cofactor. Requires Mn(2+) as cofactor.

The catalysed reaction is GTP + ATP = 3',2'-cGAMP + 2 diphosphate. It carries out the reaction GTP + ATP = pppA(2'-5')pG + diphosphate. It catalyses the reaction pppA(2'-5')pG = 3',2'-cGAMP + diphosphate. The enzyme activity is specifically activated by double-stranded RNA (dsRNA). Recognizes long dsRNA (&gt;30 bp) with no preference for 5' RNA phosphorylation. Nucleotidyltransferase that catalyzes the formation of cyclic GMP-AMP (3',2'-cGAMP) from ATP and GTP and plays a key role in antiviral innate immunity. Synthesizes 3',2'-cGAMP in a two-step reaction through production of the linear intermediate pppA(2'-5')pG. Acts as a key sensor of double-stranded RNA (dsRNA), the presence of dsRNA in the cytoplasm being a danger signal that triggers the immune responses. Directly binds dsRNA, activating the nucleotidyltransferase activity, leading to synthesis of 3',2'-cGAMP, a second messenger that binds to and activates Sting, thereby triggering the antiviral immune response via activation of the NF-kappa-B transcription factor Rel (Relish). 3',2'-cGAMP is protected from poxin cleavage. In Drosophila melanogaster (Fruit fly), this protein is Cyclic GMP-AMP synthase-like receptor 1.